The sequence spans 132 residues: DNA-directed RNA polymerase subunit omega (132 aa).

A disordered region spans residues 89 to 109; that stretch reads HSSESESIFNTSSQEEGTSFD. Residues 96–105 show a composition bias toward polar residues; it reads IFNTSSQEEG.

Belongs to the RNA polymerase subunit omega family. As to quaternary structure, the RNAP catalytic core consists of 2 alpha, 1 beta, 1 beta' and 1 omega subunit. When a sigma factor is associated with the core the holoenzyme is formed, which can initiate transcription.

The catalysed reaction is RNA(n) + a ribonucleoside 5'-triphosphate = RNA(n+1) + diphosphate. In terms of biological role, promotes RNA polymerase assembly. Latches the N- and C-terminal regions of the beta' subunit thereby facilitating its interaction with the beta and alpha subunits. In Bartonella tribocorum (strain CIP 105476 / IBS 506), this protein is DNA-directed RNA polymerase subunit omega.